We begin with the raw amino-acid sequence, 251 residues long: GTP cyclohydrolase 1 type 2 homolog (251 aa).

A divalent metal cation is bound by residues His63, His64, Asp101, His219, and Glu223.

It belongs to the GTP cyclohydrolase I type 2/NIF3 family. As to quaternary structure, toroid-shaped homohexamer. In the hexamer, 3 dimers assemble to form a ring-like structure surrounding a central hole.

The protein is GTP cyclohydrolase 1 type 2 homolog of Haemophilus influenzae (strain ATCC 51907 / DSM 11121 / KW20 / Rd).